The primary structure comprises 239 residues: Small ribosomal subunit protein uS2 (239 aa).

It belongs to the universal ribosomal protein uS2 family.

This chain is Small ribosomal subunit protein uS2, found in Francisella tularensis subsp. novicida (strain U112).